The sequence spans 490 residues: MRINPTTSDPGVSILENKNLGRIAQIIGPVLDVAFPPGKMPNIYNALVVKGRDTLGQEINVTCEVQQLLGNNRVRAVAMSATEGLKRGMDVVDMGTPLSVPVGGATLGRIFNVLGEPVDNLGPVDTRTTSPIHKSAPAFIQLDTKLSIFETGIKVVDLLAPYRRGGKIGLFGGAGVGKTVLIMELINNIAKAHGGVSVFGGVGERTREGNDLYMEMKESGVINEQNLAESKVALVYGQMNEPPGARMRVGLTALTMAEYFRDVNEQDVLLFIDNIFRFVQAGSEVSALLGRMPSAVGYQPTLSTEMGSLQERITSTKKGSITSIQAVYVPADDLTDPAPATTFAHLDATTVLSRGLAAKGIYPAVDPLDSTSTMLQPRIVGEEHYETAQQVKQTLQRYKELQDIIAILGLDELSEEDRLTVARARKIERFLSQPFFVAEVFTGSPGKYVGLAETIRGFKLILSGELDSLPEQAFYLVGNIDEATAKATNL.

Thr-6 is subject to Phosphothreonine. Ser-13 carries the phosphoserine modification. Position 172 to 179 (172 to 179 (GGAGVGKT)) interacts with ATP.

Belongs to the ATPase alpha/beta chains family. As to quaternary structure, F-type ATPases have 2 components, CF(1) - the catalytic core - and CF(0) - the membrane proton channel. CF(1) has five subunits: alpha(3), beta(3), gamma(1), delta(1), epsilon(1). CF(0) has four main subunits: a(1), b(1), b'(1) and c(9-12).

The protein localises to the plastid. It localises to the chloroplast thylakoid membrane. It catalyses the reaction ATP + H2O + 4 H(+)(in) = ADP + phosphate + 5 H(+)(out). Produces ATP from ADP in the presence of a proton gradient across the membrane. The catalytic sites are hosted primarily by the beta subunits. This is ATP synthase subunit beta, chloroplastic from Aethionema cordifolium (Lebanon stonecress).